We begin with the raw amino-acid sequence, 341 residues long: L-threonine 3-dehydrogenase (341 aa).

Residue C38 participates in Zn(2+) binding. Active-site charge relay system residues include T40 and H43. Zn(2+)-binding residues include H63, E64, C93, C96, C99, and C107. NAD(+)-binding positions include I175, D195, R200, 262 to 264 (LGI), and 286 to 287 (IY).

Belongs to the zinc-containing alcohol dehydrogenase family. In terms of assembly, homotetramer. Zn(2+) is required as a cofactor.

The protein resides in the cytoplasm. It catalyses the reaction L-threonine + NAD(+) = (2S)-2-amino-3-oxobutanoate + NADH + H(+). It functions in the pathway amino-acid degradation; L-threonine degradation via oxydo-reductase pathway; glycine from L-threonine: step 1/2. In terms of biological role, catalyzes the NAD(+)-dependent oxidation of L-threonine to 2-amino-3-ketobutyrate. This chain is L-threonine 3-dehydrogenase, found in Enterobacter sp. (strain 638).